Here is a 374-residue protein sequence, read N- to C-terminus: Probable neutral protease 2 homolog TRV_05367 (374 aa).

The N-terminal stretch at 1 to 19 (MQVIVALAALGSLAAPALG) is a signal peptide. Positions 20–189 (FSIPRGVPVS…RGPLTRINKR (170 aa)) are excised as a propeptide. Cystine bridges form between Cys197/Cys267 and Cys274/Cys292. His317 contacts Zn(2+). Residue Glu318 is part of the active site. Residues His321 and Asp332 each contribute to the Zn(2+) site.

It belongs to the peptidase M35 family. It depends on Zn(2+) as a cofactor.

It is found in the secreted. It carries out the reaction Preferential cleavage of bonds with hydrophobic residues in P1'. Also 3-Asn-|-Gln-4 and 8-Gly-|-Ser-9 bonds in insulin B chain.. Its function is as follows. Probable secreted metalloprotease that shows high activities on basic nuclear substrates such as histone and protamine. May be involved in virulence. The chain is Probable neutral protease 2 homolog TRV_05367 from Trichophyton verrucosum (strain HKI 0517).